Reading from the N-terminus, the 238-residue chain is Aspartate/glutamate leucyltransferase (238 aa).

It belongs to the R-transferase family. Bpt subfamily.

It localises to the cytoplasm. It catalyses the reaction N-terminal L-glutamyl-[protein] + L-leucyl-tRNA(Leu) = N-terminal L-leucyl-L-glutamyl-[protein] + tRNA(Leu) + H(+). The catalysed reaction is N-terminal L-aspartyl-[protein] + L-leucyl-tRNA(Leu) = N-terminal L-leucyl-L-aspartyl-[protein] + tRNA(Leu) + H(+). Functionally, functions in the N-end rule pathway of protein degradation where it conjugates Leu from its aminoacyl-tRNA to the N-termini of proteins containing an N-terminal aspartate or glutamate. This chain is Aspartate/glutamate leucyltransferase, found in Shewanella sp. (strain MR-7).